The following is a 127-amino-acid chain: Fluoride-specific ion channel FluC (127 aa).

The next 4 helical transmembrane spans lie at 4 to 24, 35 to 55, 71 to 91, and 103 to 123; these read LLLA…LLSM, LGTL…FAWF, TGFC…VFLL, and VFVN…LFSA. Na(+)-binding residues include Gly-75 and Thr-78.

Belongs to the fluoride channel Fluc/FEX (TC 1.A.43) family.

The protein localises to the cell inner membrane. It carries out the reaction fluoride(in) = fluoride(out). Na(+) is not transported, but it plays an essential structural role and its presence is essential for fluoride channel function. Fluoride-specific ion channel. Important for reducing fluoride concentration in the cell, thus reducing its toxicity. The sequence is that of Fluoride-specific ion channel FluC from Escherichia coli O8 (strain IAI1).